The primary structure comprises 97 residues: Lipolysis-activating peptide 1-alpha chain (97 aa).

Positions 1–21 (MNIMLFCSVFILVSLTGLSVS) are cleaved as a signal peptide. An LCN-type CS-alpha/beta domain is found at 25 to 88 (PGNYPMSLYG…FWAAHKNHCK (64 aa)). Cystine bridges form between Cys-39-Cys-62, Cys-48-Cys-67, and Cys-52-Cys-69.

Belongs to the long (3 C-C) scorpion toxin superfamily. As to quaternary structure, monomer (edited version) and heterodimer (non-edited version) of this alpha chain and a beta chain (AC P0CI43). Expressed by the venom gland.

It localises to the secreted. Functionally, the heterodimer non-edited LVP1 induces lipolysis in rat adipocytes. Induction of lipolysis by LVP1 appears to be mediated through the beta-2 adrenergic receptor pathway (ADRB2). The edited BmKBTx-like, similar to beta-toxins, may modulate voltage-gated sodium channels (Nav) and may block voltage-gated potassium channels (Kv). The polypeptide is Lipolysis-activating peptide 1-alpha chain (Lychas mucronatus (Chinese swimming scorpion)).